The following is a 472-amino-acid chain: Velvet complex subunit umv2 (472 aa).

Composition is skewed to basic and acidic residues over residues 1-10 (MSRSDTDGRD), 29-59 (SQRR…DSHG), 67-80 (YSRD…HRGD), and 89-105 (SYQR…EQER). Disordered regions lie at residues 1–121 (MSRS…PLEA), 281–327 (CDDG…QFGG), and 433–472 (SQGI…EDDE). The span at 106–116 (SYGGASASRSS) shows a compositional bias: low complexity. Residues 158 to 441 (ENGRRYRLVV…ASQGIKIPVR (284 aa)) enclose the Velvet domain. A compositionally biased stretch (polar residues) spans 286-298 (RSSTHPQHASEST). Positions 456–466 (DGMGDYDGASG) are enriched in gly residues.

This sequence belongs to the velvet family. VelB subfamily. In terms of assembly, component of the heterotrimeric velvet complex composed of laeA, veA and velB; VeA acting as a bridging protein between laeA and velB. Forms a heterodimeric complex with vosA; the formation of the velB-vosA complex is light-dependent.

It is found in the nucleus. It localises to the cytoplasm. Functionally, component of the velvet transcription factor complex that controls sexual/asexual developmental ratio in response to light, promoting sexual development in the darkness while stimulating asexual sporulation under illumination. The velvet complex acts as a global regulator for secondary metabolite gene expression. Component of the velB-VosA heterodimeric complex that plays a dual role in activating genes associated with spore maturation and repressing certain development-associated genes. The velB-VosA complex binds DNA through the DNA-binding domain of vosA that recognizes an 11-nucleotide consensus sequence 5'-CTGGCCGCGGC-3' consisting of two motifs in the promoters of key developmental regulatory genes. Required for full virulence on seedlings. This is Velvet complex subunit umv2 from Mycosarcoma maydis (Corn smut fungus).